A 135-amino-acid polypeptide reads, in one-letter code: Interleukin-4 (135 aa).

A signal peptide spans 1–24 (MGLTSQLIPVLVCLLVCTSHFVHG). 3 disulfides stabilise this stretch: cysteine 27/cysteine 135, cysteine 48/cysteine 85, and cysteine 70/cysteine 105. Residue asparagine 62 is glycosylated (N-linked (GlcNAc...) asparagine).

This sequence belongs to the IL-4/IL-13 family.

It is found in the secreted. Its function is as follows. Participates in at least several B-cell activation processes as well as of other cell types. It is a costimulator of DNA-synthesis. It induces the expression of class II MHC molecules on resting B-cells. It enhances both secretion and cell surface expression of IgE and IgG1. It also regulates the expression of the low affinity Fc receptor for IgE (CD23) on both lymphocytes and monocytes. Positively regulates IL31RA expression in macrophages. Stimulates autophagy in dendritic cells by interfering with mTORC1 signaling and through the induction of RUFY4. The protein is Interleukin-4 (IL4) of Bos taurus (Bovine).